A 696-amino-acid polypeptide reads, in one-letter code: Equisetin cluster transcription factor eqxF (696 aa).

Disordered stretches follow at residues 1-24 and 73-117; these read MADQVQDVHPMEWGPGKTPQGRAR and NQEQ…PADY.

The protein localises to the nucleus. Functionally, transcription factor that regulates the expression of the gene cluster that mediates the biosynthesis of Equisetin. This Fusarium heterosporum protein is Equisetin cluster transcription factor eqxF.